Reading from the N-terminus, the 370-residue chain is 3-isopropylmalate dehydrogenase (370 aa).

An NAD(+)-binding site is contributed by glycine 76–glutamate 89. Substrate contacts are provided by arginine 96, arginine 106, arginine 134, and aspartate 224. The Mg(2+) site is built by aspartate 224, aspartate 248, and aspartate 252. Glycine 282–asparagine 294 contributes to the NAD(+) binding site.

The protein belongs to the isocitrate and isopropylmalate dehydrogenases family. LeuB type 1 subfamily. In terms of assembly, homodimer. Mg(2+) is required as a cofactor. Requires Mn(2+) as cofactor.

It is found in the cytoplasm. The catalysed reaction is (2R,3S)-3-isopropylmalate + NAD(+) = 4-methyl-2-oxopentanoate + CO2 + NADH. The protein operates within amino-acid biosynthesis; L-leucine biosynthesis; L-leucine from 3-methyl-2-oxobutanoate: step 3/4. In terms of biological role, catalyzes the oxidation of 3-carboxy-2-hydroxy-4-methylpentanoate (3-isopropylmalate) to 3-carboxy-4-methyl-2-oxopentanoate. The product decarboxylates to 4-methyl-2 oxopentanoate. The sequence is that of 3-isopropylmalate dehydrogenase from Bacillus licheniformis (strain ATCC 14580 / DSM 13 / JCM 2505 / CCUG 7422 / NBRC 12200 / NCIMB 9375 / NCTC 10341 / NRRL NRS-1264 / Gibson 46).